The following is a 365-amino-acid chain: Flavone synthase (365 aa).

The Fe cation site is built by H76, H218, D220, and H276. The Fe2OG dioxygenase domain occupies 194–295 (MEQKVLINYY…RLSIATFQNP (102 aa)). The disordered stretch occupies residues 345–365 (RLQDEKAKLEMKSKSADENLA).

This sequence belongs to the iron/ascorbate-dependent oxidoreductase family. It depends on Fe cation as a cofactor. L-ascorbate serves as cofactor.

The protein resides in the cytoplasm. The enzyme catalyses a flavanone + 2-oxoglutarate + O2 = a flavone + succinate + CO2 + H2O. It participates in secondary metabolite biosynthesis; flavonoid biosynthesis. Its function is as follows. Involved in the conversion of naringenin to apigenin. Acts via a direct 2,3-desaturation of flavanones instead of a sequential hydroxylation/dehydratation mechanism. The protein is Flavone synthase (FNSI) of Petroselinum crispum (Parsley).